The following is a 71-amino-acid chain: Brevinin-1E (71 aa).

Residues 1-22 (MFTLKKSMLLLFFLGTINLSLC) form the signal peptide. A propeptide spanning residues 23 to 45 (EEERDADEEERRDNPDESEVEVE) is cleaved from the precursor. Cysteine 65 and cysteine 71 are disulfide-bonded.

This sequence belongs to the frog skin active peptide (FSAP) family. Brevinin subfamily. As to expression, expressed by the skin glands.

Its subcellular location is the secreted. In terms of biological role, shows antibacterial activity against representative Gram-negative and Gram-positive bacterial species, and a very high hemolytic activity. This is Brevinin-1E from Pelophylax lessonae (Pool frog).